The primary structure comprises 41 residues: Large ribosomal subunit protein bL36 (41 aa).

The protein belongs to the bacterial ribosomal protein bL36 family.

The polypeptide is Large ribosomal subunit protein bL36 (Methylocella silvestris (strain DSM 15510 / CIP 108128 / LMG 27833 / NCIMB 13906 / BL2)).